The sequence spans 150 residues: Large ribosomal subunit protein bL9 (150 aa).

This sequence belongs to the bacterial ribosomal protein bL9 family.

Its function is as follows. Binds to the 23S rRNA. The chain is Large ribosomal subunit protein bL9 from Clavibacter sepedonicus (Clavibacter michiganensis subsp. sepedonicus).